Reading from the N-terminus, the 175-residue chain is SKP1-like protein 20 (175 aa).

Residues 117 to 175 (ILAANYLNIKGLLDLTCQTVADMIKGKTPEEIRKTFNIKNDFTPEEEEEVRRENQWAFE) form an interaction with the F-box domain of F-box proteins region.

The protein belongs to the SKP1 family. As to quaternary structure, part of a SCF (SKP1-CUL1-F-box protein) E3 ubiquitin-protein ligase complex. Interacts with rice black streaked dwarf virus RBSDV protein P7-2. Is able to form the SCF complex together with CUL1 and the viral P7-2 protein. Interacts with D3.

Its subcellular location is the nucleus. The protein operates within protein modification; protein ubiquitination. Functionally, involved in ubiquitination and subsequent proteasomal degradation of target proteins. Together with CUL1, a RING-box and a F-box protein, it forms a SCF E3 ubiquitin ligase complex. The functional specificity of this complex depends on the type of F-box protein. In the SCF complex, it serves as an adapter that links the F-box protein to CUL1. The polypeptide is SKP1-like protein 20 (Oryza sativa subsp. japonica (Rice)).